Consider the following 412-residue polypeptide: Orcinol synthase (412 aa).

Catalysis depends on residues Cys-164, His-322, and Asn-355.

The protein belongs to the thiolase-like superfamily. Chalcone/stilbene synthases family. Homodimer. In terms of tissue distribution, mainly expressed in young leaves, and barely in mature leaves and twigs.

The enzyme catalyses 3 malonyl-CoA + acetyl-CoA + 3 H(+) = orcinol + 4 CO2 + 4 CoA. It catalyses the reaction 3 malonyl-CoA + acetyl-CoA + 2 H(+) = orsellinate + 3 CO2 + 4 CoA. The catalysed reaction is 3 malonyl-CoA + acetyl-CoA + 3 H(+) = tetraacetate lactone + 3 CO2 + 4 CoA. It carries out the reaction 2 malonyl-CoA + acetyl-CoA + 2 H(+) = triacetate lactone + 2 CO2 + 3 CoA. The enzyme catalyses 3 malonyl-CoA + acetyl-CoA + 3 H(+) = 2-acetylphloroglucinol + 3 CO2 + 4 CoA. It functions in the pathway secondary metabolite biosynthesis; terpenoid biosynthesis. Functionally, involved in the biosynthesis of acetate-derived aromatic tetraketides natural products, precursors of daurichromenic acid, an anti-human immunodeficiency viruses (HIV) meroterpenoid consisting of sesquiterpene and orsellinic acid (OSA) moieties. Accepts acetyl-CoA as starter substrate and produces orcinol as the major reaction product, along with four minor products including OSA, tetraacetate lactone, triacetate lactone and 2-acetylphloroglucinol. The protein is Orcinol synthase of Rhododendron dauricum (Azalea daurica).